The chain runs to 380 residues: MNYFITFFFMHIAVLNFYFRFSNGNKIVMRVGGSPETKRLERSKRQALRMDNEPRWPRGTINYFFDEQRFDENSRATVLRAMEKISNHTCIKFSPKDARIKLRIVSDKGCQAAIGRVGGDQQYLSFPTSCYSVGSASELIHVIGFLHSHQRADRDEYLKLNLQPWRLNDWFQTMQYKKYLDQWWIVPYDYGSIMQYHDSDNEYGPKNSKYFRTMGSQIPSYFDYLMINEYYQCSCEGEEQINCKNRGYPNPGNCSECNCPLESSEEWKNITLNLDAGYMSLQNGTKLHQIDFVFRYLSISAPANKTIEVDIREITGVECNYGCYIGGIEVKTHEDRRMTSPRLCCKNDNEIYKSRNNPTIVMAFNSEGLDKYNIFYRFTD.

Positions 1 to 24 (MNYFITFFFMHIAVLNFYFRFSNG) are cleaved as a signal peptide. The 189-residue stretch at 46 to 234 (QALRMDNEPR…LMINEYYQCS (189 aa)) folds into the Peptidase M12A domain. Residue Asn-87 is glycosylated (N-linked (GlcNAc...) asparagine). Disulfide bonds link Cys-90/Cys-233 and Cys-110/Cys-130. The active site involves Glu-138. N-linked (GlcNAc...) asparagine glycans are attached at residues Asn-253, Asn-269, Asn-283, and Asn-304.

It localises to the secreted. Its function is as follows. May lack metalloprotease activity. The sequence is that of Zinc metalloproteinase-like protein nas-21 (nas-21) from Caenorhabditis elegans.